Reading from the N-terminus, the 606-residue chain is UPF0329 protein ECU06_0090 (606 aa).

Residues 317–401 are disordered; the sequence is KKEEERREEE…SREACSKERN (85 aa). The span at 328-353 shows a compositional bias: basic and acidic residues; the sequence is EKKRKEEVVQRNVEELLRGEEEEKKG. The segment covering 354 to 367 has biased composition (basic residues); it reads AKAKRKSKKKKKGS. A compositionally biased stretch (basic and acidic residues) spans 381 to 401; sequence SENREAQEMEDSREACSKERN.

It belongs to the UPF0329 family.

In Encephalitozoon cuniculi (strain GB-M1) (Microsporidian parasite), this protein is UPF0329 protein ECU06_0090.